The chain runs to 323 residues: DNA-directed RNA polymerase subunit alpha 1 (323 aa).

Residues 1–228 (MSNNNSKQEF…EQISVFVSLR (228 aa)) form an alpha N-terminal domain (alpha-NTD) region. Residues 244–323 (IDPILLKPID…DNFRELVEGK (80 aa)) form an alpha C-terminal domain (alpha-CTD) region.

This sequence belongs to the RNA polymerase alpha chain family. Homodimer. The RNAP catalytic core consists of 2 alpha, 1 beta, 1 beta' and 1 omega subunit. When a sigma factor is associated with the core the holoenzyme is formed, which can initiate transcription.

The enzyme catalyses RNA(n) + a ribonucleoside 5'-triphosphate = RNA(n+1) + diphosphate. In terms of biological role, DNA-dependent RNA polymerase catalyzes the transcription of DNA into RNA using the four ribonucleoside triphosphates as substrates. In Francisella tularensis subsp. novicida (strain U112), this protein is DNA-directed RNA polymerase subunit alpha 1.